Consider the following 288-residue polypeptide: ATP synthase gamma chain (288 aa).

This sequence belongs to the ATPase gamma chain family. As to quaternary structure, F-type ATPases have 2 components, CF(1) - the catalytic core - and CF(0) - the membrane proton channel. CF(1) has five subunits: alpha(3), beta(3), gamma(1), delta(1), epsilon(1). CF(0) has three main subunits: a, b and c.

The protein localises to the cell inner membrane. In terms of biological role, produces ATP from ADP in the presence of a proton gradient across the membrane. The gamma chain is believed to be important in regulating ATPase activity and the flow of protons through the CF(0) complex. This Rickettsia bellii (strain RML369-C) protein is ATP synthase gamma chain.